Consider the following 369-residue polypeptide: Tetraacyldisaccharide 4'-kinase (369 aa).

68-75 (VVGGTGKT) contacts ATP.

The protein belongs to the LpxK family.

It catalyses the reaction a lipid A disaccharide + ATP = a lipid IVA + ADP + H(+). Its pathway is glycolipid biosynthesis; lipid IV(A) biosynthesis; lipid IV(A) from (3R)-3-hydroxytetradecanoyl-[acyl-carrier-protein] and UDP-N-acetyl-alpha-D-glucosamine: step 6/6. In terms of biological role, transfers the gamma-phosphate of ATP to the 4'-position of a tetraacyldisaccharide 1-phosphate intermediate (termed DS-1-P) to form tetraacyldisaccharide 1,4'-bis-phosphate (lipid IVA). The polypeptide is Tetraacyldisaccharide 4'-kinase (Chlamydia muridarum (strain MoPn / Nigg)).